We begin with the raw amino-acid sequence, 494 residues long: Sugar phosphate exchanger 3 (494 aa).

A helical transmembrane segment spans residues 10–30 (GALLTSFSHHHLAVFLLTFFS). A glycan (N-linked (GlcNAc...) asparagine) is linked at Asn58. 5 helical membrane-spanning segments follow: residues 81 to 101 (TLFL…GLFI), 113 to 133 (WVLS…GTLT), 146 to 166 (GLWI…VAVM), 177 to 197 (VVFG…AFLA), and 209 to 229 (FLVT…GLLV). The interval 240–261 (GAEESSEEDSQRPLIDGAENED) is disordered. 6 helical membrane passes run 297-317 (LAYA…PFYL), 333-353 (IWYD…SDVL), 357-377 (APVL…YSRS), 386-406 (LLMT…SSAI), 428-448 (GIVD…VSLI), and 457-477 (VFYF…PLIV).

Belongs to the major facilitator superfamily. Organophosphate:Pi antiporter (OPA) (TC 2.A.1.4) family. As to quaternary structure, interacts with ATRAID; the interaction is direct and both proteins are mutually dependent for their stability. In terms of processing, glycosylated.

It localises to the endoplasmic reticulum membrane. The protein resides in the lysosome membrane. Unlike the other SLC37 members, lacks glucose-6-phosphate antiporter activity. In osteoclasts, forms a transporter complex with ATRAID for nitrogen-containing-bisphophonates (N-BPs) required for releasing N-BP molecules that have trafficked to lysosomes through fluid-phase endocytosis into the cytosol. This chain is Sugar phosphate exchanger 3 (Slc37a3), found in Mus musculus (Mouse).